Consider the following 273-residue polypeptide: Large ribosomal subunit protein uL2 (273 aa).

The disordered stretch occupies residues 224 to 263 (AMNPVDHPHGGGEGRNFGKHPVTPWGLQTKGKKTRKNKRT). Over residues 253 to 263 (KGKKTRKNKRT) the composition is skewed to basic residues.

This sequence belongs to the universal ribosomal protein uL2 family. Part of the 50S ribosomal subunit. Forms a bridge to the 30S subunit in the 70S ribosome.

One of the primary rRNA binding proteins. Required for association of the 30S and 50S subunits to form the 70S ribosome, for tRNA binding and peptide bond formation. It has been suggested to have peptidyltransferase activity; this is somewhat controversial. Makes several contacts with the 16S rRNA in the 70S ribosome. This chain is Large ribosomal subunit protein uL2, found in Buchnera aphidicola subsp. Schizaphis graminum (strain Sg).